The sequence spans 467 residues: uncharacterized protein (467 aa).

This is an uncharacterized protein from Acanthamoeba polyphaga (Amoeba).